The following is a 189-amino-acid chain: Putative manganese efflux pump MntP (189 aa).

6 consecutive transmembrane segments (helical) span residues 3–23 (PVAT…AAIG), 41–61 (LIFG…GKAA), 62–82 (AQYV…VLGA), 104–124 (FWLL…VGAG), 132–152 (IYST…IGVM), and 168–188 (AGGI…LNIF).

It belongs to the MntP (TC 9.B.29) family.

The protein resides in the cell inner membrane. Probably functions as a manganese efflux pump. This is Putative manganese efflux pump MntP from Paraburkholderia phytofirmans (strain DSM 17436 / LMG 22146 / PsJN) (Burkholderia phytofirmans).